Consider the following 505-residue polypeptide: Deoxyguanosinetriphosphate triphosphohydrolase (505 aa).

The HD domain occupies 66–273; it reads RLTHSMEVQQ…MEAADDISYC (208 aa).

It belongs to the dGTPase family. Type 1 subfamily. Homotetramer. Requires Mg(2+) as cofactor.

The enzyme catalyses dGTP + H2O = 2'-deoxyguanosine + triphosphate + H(+). DGTPase preferentially hydrolyzes dGTP over the other canonical NTPs. In Salmonella typhimurium (strain LT2 / SGSC1412 / ATCC 700720), this protein is Deoxyguanosinetriphosphate triphosphohydrolase.